Here is a 113-residue protein sequence, read N- to C-terminus: U11-theraphotoxin-Hhn1k (113 aa).

An N-terminal signal peptide occupies residues 1–21 (MNTVRVTFLLVFVLAVSLGQA). The propeptide occupies 22-74 (DKDENRMEMQEKTEQGKSYLDFAENLLLQKLEELEAKLLEEDSEESRNSRQKR). Residues 61 to 83 (EEDSEESRNSRQKRCIGEGVPCD) are disordered. 3 disulfide bridges follow: cysteine 75–cysteine 90, cysteine 82–cysteine 95, and cysteine 89–cysteine 110.

Belongs to the neurotoxin 14 (magi-1) family. 01 (HNTX-16) subfamily. As to expression, expressed by the venom gland.

The protein resides in the secreted. Functionally, probable ion channel inhibitor. The polypeptide is U11-theraphotoxin-Hhn1k (Cyriopagopus hainanus (Chinese bird spider)).